Reading from the N-terminus, the 117-residue chain is MGTSELLKQIYDINLSYLLLAQRIINQEKVSAMFRLGIDEAMADALARLTLPEMVKLAETNQLVCQFRFDDHQSISRLTRESRVEDLQQIHTGILLSSRLLRNVTKEQETPKKRAAS.

This sequence belongs to the FlhD family. As to quaternary structure, homodimer; disulfide-linked. Forms a heterohexamer composed of two FlhC and four FlhD subunits. Each FlhC binds a FlhD dimer, forming a heterotrimer, and a hexamer assembles by dimerization of two heterotrimers.

It localises to the cytoplasm. Functions in complex with FlhC as a master transcriptional regulator that regulates transcription of several flagellar and non-flagellar operons by binding to their promoter region. Activates expression of class 2 flagellar genes, including fliA, which is a flagellum-specific sigma factor that turns on the class 3 genes. Also regulates genes whose products function in a variety of physiological pathways. In Erwinia amylovora (strain CFBP1430), this protein is Flagellar transcriptional regulator FlhD.